Reading from the N-terminus, the 315-residue chain is Methionyl-tRNA formyltransferase (315 aa).

Position 113 to 116 (113 to 116 (SILP)) interacts with (6S)-5,6,7,8-tetrahydrofolate.

Belongs to the Fmt family.

The catalysed reaction is L-methionyl-tRNA(fMet) + (6R)-10-formyltetrahydrofolate = N-formyl-L-methionyl-tRNA(fMet) + (6S)-5,6,7,8-tetrahydrofolate + H(+). In terms of biological role, attaches a formyl group to the free amino group of methionyl-tRNA(fMet). The formyl group appears to play a dual role in the initiator identity of N-formylmethionyl-tRNA by promoting its recognition by IF2 and preventing the misappropriation of this tRNA by the elongation apparatus. This chain is Methionyl-tRNA formyltransferase, found in Vibrio cholerae serotype O1 (strain M66-2).